The following is a 454-amino-acid chain: tRNA modification GTPase MnmE (454 aa).

3 residues coordinate (6S)-5-formyl-5,6,7,8-tetrahydrofolate: Arg-23, Glu-80, and Lys-120. Residues 216-377 (GMKVVIAGRP…LRNNLKQSMG (162 aa)) enclose the TrmE-type G domain. Asn-226 is a K(+) binding site. GTP contacts are provided by residues 226 to 231 (NAGKSS), 245 to 251 (TDIAGTT), 270 to 273 (DTAG), 335 to 338 (NKAD), and 358 to 360 (SAR). Residue Ser-230 participates in Mg(2+) binding. Residues Thr-245, Ile-247, and Thr-250 each coordinate K(+). Thr-251 lines the Mg(2+) pocket. Residue Lys-454 coordinates (6S)-5-formyl-5,6,7,8-tetrahydrofolate.

It belongs to the TRAFAC class TrmE-Era-EngA-EngB-Septin-like GTPase superfamily. TrmE GTPase family. Homodimer. Heterotetramer of two MnmE and two MnmG subunits. Requires K(+) as cofactor.

Its subcellular location is the cytoplasm. Exhibits a very high intrinsic GTPase hydrolysis rate. Involved in the addition of a carboxymethylaminomethyl (cmnm) group at the wobble position (U34) of certain tRNAs, forming tRNA-cmnm(5)s(2)U34. The polypeptide is tRNA modification GTPase MnmE (Salmonella paratyphi A (strain AKU_12601)).